A 363-amino-acid chain; its full sequence is Probable mannitol dehydrogenase 3 (363 aa).

7 residues coordinate Zn(2+): cysteine 51, histidine 73, cysteine 104, cysteine 107, cysteine 110, cysteine 118, and cysteine 168.

It belongs to the zinc-containing alcohol dehydrogenase family. The cofactor is Zn(2+).

It carries out the reaction D-mannitol + NAD(+) = D-mannose + NADH + H(+). Oxidizes mannitol to mannose. Provides the initial step by which translocated mannitol is committed to central metabolism and, by regulating mannitol pool size, is important in regulating salt tolerance at the cellular level. The sequence is that of Probable mannitol dehydrogenase 3 (CAD3) from Stylosanthes humilis (Townsville stylo).